Here is a 104-residue protein sequence, read N- to C-terminus: Protein SMALL AUXIN UP-REGULATED RNA 9 (104 aa).

It belongs to the ARG7 family. Interacts with and inhibits PP2C-D subfamily of type 2C phosphatases such as PP2C67/PP2C-D1. In terms of tissue distribution, expressed in etiolated hypocotyls, petioles, leaves and flowers.

Its subcellular location is the cell membrane. Functionally, provide a mechanistic link between auxin and plasma membrane H(+)-ATPases (PM H(+)-ATPases, e.g. AHA1 and AHA2), and triggers PM H(+)-ATPases activity by promoting phosphorylation of their C-terminal autoinhibitory domain as a result of PP2C-D subfamily of type 2C phosphatases inhibition, thus leading to the acidification of the apoplast and the facilitation of solutes and water uptake to drive cell expansion. Triggers plant growth probably by promoting cell elongation. Regulates branch angles and bending. Probably involved in light intensity mediated root development. The sequence is that of Protein SMALL AUXIN UP-REGULATED RNA 9 from Arabidopsis thaliana (Mouse-ear cress).